The chain runs to 461 residues: ERBB receptor feedback inhibitor 1 (461 aa).

At Ser-2 the chain carries N-acetylserine. 2 positions are modified to phosphothreonine: Thr-126 and Thr-130. The tract at residues 228 to 353 (QNRVVPDPNP…VMPPTQSFAP (126 aa)) is disordered. Ser-251 and Ser-272 each carry phosphoserine. Over residues 265 to 274 (SSCTHRASPS) the composition is skewed to polar residues. A compositionally biased stretch (pro residues) spans 283 to 292 (PPRVPIPPRP). Ser-301 carries the phosphoserine modification. Positions 311–324 (DEDRPPKVPPREPL) are enriched in basic and acidic residues. Over residues 325 to 336 (SRSNSRTPSPKS) the composition is skewed to polar residues. An interaction with EGFR and ERBB2 and regulation of EGFR activation region spans residues 333-362 (SPKSLPSYLNGVMPPTQSFAPDPKYVSSKA). Ser-460 is subject to Phosphoserine.

It belongs to the MIG6 family. In terms of assembly, interacts with EGFR. Interacts with ERBB2. Detected in lung, in airway epithelial cells and alveolar type 2 cells (at protein level). Detected in uterus stroma, luminal epithelium and glandular epithelium.

It localises to the cytoplasm. Its subcellular location is the cell membrane. The protein localises to the nucleus. Functionally, negative regulator of EGFR signaling in skin morphogenesis. Acts as a negative regulator for several EGFR family members, including ERBB2, ERBB3 and ERBB4. Inhibits EGFR catalytic activity by interfering with its dimerization. Inhibits autophosphorylation of EGFR, ERBB2 and ERBB4. Important for normal keratinocyte proliferation and differentiation. Plays a role in modulating the response to steroid hormones in the uterus. Required for normal response to progesterone in the uterus and for fertility. Mediates epithelial estrogen responses in the uterus by regulating ESR1 levels and activation. Important for regulation of endometrium cell proliferation. Important for normal prenatal and perinatal lung development. This chain is ERBB receptor feedback inhibitor 1 (Errfi1), found in Mus musculus (Mouse).